The sequence spans 417 residues: RH-like protein IIR (417 aa).

Helical transmembrane passes span 12 to 32, 44 to 64, 77 to 97, 125 to 145, 172 to 192, 203 to 223, 238 to 258, 265 to 285, 287 to 307, 331 to 351, and 358 to 378; these read CLPLCALTLEAALILLFYFFT, LVASYQVGQDLTVMAAIGFGF, VAFSLFMLALGVQWAILLDGF, ISVDAVLGKVNLVQLVVMVLV, IYVFAAYFGLSVAWCLPKPLP, TIPSLSAMLGALFLWMFWPSF, VFNTYYAVAVSVVTAISGSSL, ISMSYMHNAVLAGGVAVGTSC, LIPSPWLAMVLGLVAGLISVG, NFSWLGLLGEIIYIVLVVRHT, and MIGFQVLLRIGEFSLATTIAL.

It belongs to the ammonium transporter (TC 2.A.49) family. Rh subfamily.

It localises to the membrane. In terms of biological role, may be part of an oligomeric complex which is likely to have a transport or channel function in the erythrocyte membrane. In Pan troglodytes (Chimpanzee), this protein is RH-like protein IIR.